Consider the following 317-residue polypeptide: Melanocyte-stimulating hormone receptor (317 aa).

Polar residues predominate over residues 1–20; sequence MPVQGSQRSLLGAVNSTPTA. The disordered stretch occupies residues 1–23; sequence MPVQGSQRSLLGAVNSTPTATPH. The Extracellular segment spans residues 1 to 37; sequence MPVQGSQRSLLGAVNSTPTATPHLRPAANQTGPQCLE. N-linked (GlcNAc...) asparagine glycosylation is present at N29. Residues 38–63 form a helical membrane-spanning segment; that stretch reads VSIPDGLFLCLGLVSLVENTLVVAAI. Residues 64–72 lie on the Cytoplasmic side of the membrane; the sequence is AKNRNLHSP. The helical transmembrane segment at 73–93 threads the bilayer; it reads MYCFICCLALSDLLVSVSSVL. Residues 94 to 118 are Extracellular-facing; the sequence is ETAVLLLLGAGALAAQATVVQQLGN. A helical membrane pass occupies residues 119–140; sequence VIDVLLCSSMVSSLFFLGAIAM. Over 141–163 the chain is Cytoplasmic; it reads DRYISIFYALRYHSIVTLARARR. The helical transmembrane segment at 164–183 threads the bilayer; sequence AIAAIWAASILSSTLFIAYC. Residues 184–191 are Extracellular-facing; it reads DRTAALLC. Residues 192–211 traverse the membrane as a helical segment; that stretch reads LVVFFLAMLVLMAVLYVHML. Topologically, residues 212–240 are cytoplasmic; that stretch reads TQARQHAQGIARLHKRQRPVQQGWGLKGA. The chain crosses the membrane as a helical span at residues 241-266; the sequence is ATLTILLGVFFLCWGPFFLHLTLIAV. Over 267–279 the chain is Extracellular; the sequence is CPQHPTCSCIFKN. A helical transmembrane segment spans residues 280–300; that stretch reads FRLFLALIVCNAIVDPLIYAF. The Cytoplasmic segment spans residues 301-317; the sequence is RSQELRKTLKEVLLFFW.

It belongs to the G-protein coupled receptor 1 family. As to quaternary structure, interacts with MGRN1, but does not undergo MGRN1-mediated ubiquitination; this interaction competes with GNAS-binding and thus inhibits agonist-induced cAMP production. Interacts with OPN3; the interaction results in a decrease in MC1R-mediated cAMP signaling and ultimately a decrease in melanin production in melanocytes.

It is found in the cell membrane. In terms of biological role, receptor for MSH (alpha, beta and gamma) and ACTH. The activity of this receptor is mediated by G proteins which activate adenylate cyclase. Mediates melanogenesis, the production of eumelanin (black/brown) and phaeomelanin (red/yellow), via regulation of cAMP signaling in melanocytes. The protein is Melanocyte-stimulating hormone receptor (MC1R) of Lemur catta (Ring-tailed lemur).